The following is a 299-amino-acid chain: ATP phosphoribosyltransferase (299 aa).

This sequence belongs to the ATP phosphoribosyltransferase family. Long subfamily. Mg(2+) serves as cofactor.

It is found in the cytoplasm. It catalyses the reaction 1-(5-phospho-beta-D-ribosyl)-ATP + diphosphate = 5-phospho-alpha-D-ribose 1-diphosphate + ATP. It functions in the pathway amino-acid biosynthesis; L-histidine biosynthesis; L-histidine from 5-phospho-alpha-D-ribose 1-diphosphate: step 1/9. Its activity is regulated as follows. Feedback inhibited by histidine. Its function is as follows. Catalyzes the condensation of ATP and 5-phosphoribose 1-diphosphate to form N'-(5'-phosphoribosyl)-ATP (PR-ATP). Has a crucial role in the pathway because the rate of histidine biosynthesis seems to be controlled primarily by regulation of HisG enzymatic activity. This chain is ATP phosphoribosyltransferase, found in Shewanella halifaxensis (strain HAW-EB4).